Consider the following 208-residue polypeptide: Ribosomal RNA large subunit methyltransferase E (208 aa).

Gly-61, Trp-63, Asp-81, Asp-97, and Asp-122 together coordinate S-adenosyl-L-methionine. Lys-162 functions as the Proton acceptor in the catalytic mechanism.

It belongs to the class I-like SAM-binding methyltransferase superfamily. RNA methyltransferase RlmE family.

The protein resides in the cytoplasm. It carries out the reaction uridine(2552) in 23S rRNA + S-adenosyl-L-methionine = 2'-O-methyluridine(2552) in 23S rRNA + S-adenosyl-L-homocysteine + H(+). Its function is as follows. Specifically methylates the uridine in position 2552 of 23S rRNA at the 2'-O position of the ribose in the fully assembled 50S ribosomal subunit. This is Ribosomal RNA large subunit methyltransferase E from Pseudomonas putida (strain W619).